The sequence spans 807 residues: Glycerol-3-phosphate acyltransferase (807 aa).

The short motif at 305 to 310 (CHRSHM) is the HXXXXD motif element.

This sequence belongs to the GPAT/DAPAT family.

It is found in the cell inner membrane. The catalysed reaction is sn-glycerol 3-phosphate + an acyl-CoA = a 1-acyl-sn-glycero-3-phosphate + CoA. Its pathway is phospholipid metabolism; CDP-diacylglycerol biosynthesis; CDP-diacylglycerol from sn-glycerol 3-phosphate: step 1/3. The chain is Glycerol-3-phosphate acyltransferase from Vibrio atlanticus (strain LGP32) (Vibrio splendidus (strain Mel32)).